Consider the following 227-residue polypeptide: ATP-dependent dethiobiotin synthetase BioD (227 aa).

Asp12–His17 lines the ATP pocket. Residue Thr16 participates in Mg(2+) binding. Lys37 is an active-site residue. Position 41 (Ser41) interacts with substrate. ATP is bound by residues Asp54, Glu116–Gly119, Asn176–Gln177, and Pro205–Ser207. 2 residues coordinate Mg(2+): Asp54 and Glu116.

It belongs to the dethiobiotin synthetase family. In terms of assembly, homodimer. Requires Mg(2+) as cofactor.

The protein localises to the cytoplasm. The enzyme catalyses (7R,8S)-7,8-diammoniononanoate + CO2 + ATP = (4R,5S)-dethiobiotin + ADP + phosphate + 3 H(+). It participates in cofactor biosynthesis; biotin biosynthesis; biotin from 7,8-diaminononanoate: step 1/2. Its function is as follows. Catalyzes a mechanistically unusual reaction, the ATP-dependent insertion of CO2 between the N7 and N8 nitrogen atoms of 7,8-diaminopelargonic acid (DAPA, also called 7,8-diammoniononanoate) to form a ureido ring. This Pseudoalteromonas translucida (strain TAC 125) protein is ATP-dependent dethiobiotin synthetase BioD.